Consider the following 204-residue polypeptide: Guanylate kinase (204 aa).

The Guanylate kinase-like domain maps to 5–184 (GLLLVLSGPS…AVNHIKAIVD (180 aa)). 12–19 (GPSGVGKG) contributes to the ATP binding site.

Belongs to the guanylate kinase family.

The protein resides in the cytoplasm. It carries out the reaction GMP + ATP = GDP + ADP. Essential for recycling GMP and indirectly, cGMP. This is Guanylate kinase from Lactobacillus delbrueckii subsp. bulgaricus (strain ATCC 11842 / DSM 20081 / BCRC 10696 / JCM 1002 / NBRC 13953 / NCIMB 11778 / NCTC 12712 / WDCM 00102 / Lb 14).